A 315-amino-acid polypeptide reads, in one-letter code: Replication-associated protein VP4 (315 aa).

Residues tyrosine 176 and tyrosine 180 each act as O-(5'-phospho-DNA)-tyrosine intermediate in the active site. A coiled-coil region spans residues 253–315 (EYDAKVKLKS…FKQLQEKLKL (63 aa)).

This sequence belongs to the microviridae Rep protein family.

It catalyses the reaction ATP + (deoxyribonucleotide)n-3'-hydroxyl + 5'-phospho-(deoxyribonucleotide)m = (deoxyribonucleotide)n+m + AMP + diphosphate.. Its function is as follows. Plays an essential role in viral DNA replication. Binds the origin of replication and cleaves the dsDNA replicative form I (RFI) and becomes covalently bound to it via phosphotyrosine bond, generating the dsDNA replicative form II (RFII). In turn, viral DNA replication initiates at the 3'-OH of the cleavage site. After one round of rolling circle synthesis, protein VP4 is linked to the newly synthesized ssDNA and joins the ends of the displaced strand to generate a circular single-stranded molecule ready to be packed into a virion. This Bdellovibrio bacteriovorus (Bacteriophage phiMH2K) protein is Replication-associated protein VP4.